Here is a 92-residue protein sequence, read N- to C-terminus: DNA-directed RNA polymerase subunit Rpo11 (92 aa).

This sequence belongs to the archaeal Rpo11/eukaryotic RPB11/RPC19 RNA polymerase subunit family. Part of the RNA polymerase complex.

Its subcellular location is the cytoplasm. It catalyses the reaction RNA(n) + a ribonucleoside 5'-triphosphate = RNA(n+1) + diphosphate. Functionally, DNA-dependent RNA polymerase (RNAP) catalyzes the transcription of DNA into RNA using the four ribonucleoside triphosphates as substrates. The polypeptide is DNA-directed RNA polymerase subunit Rpo11 (Methanosarcina barkeri (strain Fusaro / DSM 804)).